A 336-amino-acid chain; its full sequence is Aspartate--ammonia ligase (336 aa).

The protein belongs to the class-II aminoacyl-tRNA synthetase family. AsnA subfamily.

It localises to the cytoplasm. It catalyses the reaction L-aspartate + NH4(+) + ATP = L-asparagine + AMP + diphosphate + H(+). It participates in amino-acid biosynthesis; L-asparagine biosynthesis; L-asparagine from L-aspartate (ammonia route): step 1/1. The protein is Aspartate--ammonia ligase of Lactobacillus johnsonii (strain CNCM I-12250 / La1 / NCC 533).